Consider the following 172-residue polypeptide: MLDAFAKVVAQADARGEFLSNTQLDALSSMVAEGNKRLDVVNKINSNASAIVTNSARALFAEQPQLIQPGGNAYTSRRMAACLRDMEIVLRYVSYAMIAGDSSVLDDRCLNGLRETYQALGTPGSSVSVAVQKMKEASVALANDLTGTPQGDCSALVAELASYFDRAAVSVV.

Asparagine 72 bears the N4-methylasparagine mark. Residues cysteine 82 and cysteine 153 each contribute to the (2R,3E)-phycocyanobilin site.

This sequence belongs to the phycobiliprotein family. As to quaternary structure, heterodimer of an alpha and a beta subunit, which further assembles into trimers and the trimers into hexamers. The basic functional unit of phycobiliproteins is a ring-shaped hexamer formed from two back-to-back trimers contacting via the alpha chain subunits. The trimers are composed of alpha/beta subunit heterodimers arranged around a three-fold axis of symmetry. The phycoerythrins also contain a gamma subunit which is located in the center of the hexamer. Contains two covalently linked bilin chromophores.

It localises to the plastid. The protein localises to the chloroplast thylakoid membrane. Its function is as follows. Light-harvesting photosynthetic bile pigment-protein from the phycobiliprotein complex (phycobilisome, PBS). Phycocyanin is the major phycobiliprotein in the PBS rod. The chain is C-phycocyanin beta chain (cpcB) from Pyropia haitanensis (Red seaweed).